The chain runs to 319 residues: tRNA uridine(34) hydroxylase (319 aa).

One can recognise a Rhodanese domain in the interval 127–221; that stretch reads KQEDTVIIDA…YGKDPEVQGE (95 aa). Residue Cys181 is the Cysteine persulfide intermediate of the active site.

The protein belongs to the TrhO family.

The catalysed reaction is uridine(34) in tRNA + AH2 + O2 = 5-hydroxyuridine(34) in tRNA + A + H2O. Functionally, catalyzes oxygen-dependent 5-hydroxyuridine (ho5U) modification at position 34 in tRNAs. This is tRNA uridine(34) hydroxylase from Bacillus mycoides (strain KBAB4) (Bacillus weihenstephanensis).